Reading from the N-terminus, the 212-residue chain is MKRYFVTGTDTDCGKTFVTNQLVNYFSNSAAIKPIASGCEYSENQLVNSDALLHQQQNHLSLEIINPWRFRLPVSPHLSAREDGASIDVHKVADYCLNLQLNDIKKLFIEGAGGLMVPLNEQDTWLDFLKLTRIPVILVVGMKLGCINHTLLTQEVLEINKIKCQGWIANCLDQDMLMLDENINTLEAKLKYPLLARTNYGGKISDICLSSL.

Asp-12–Phe-17 contacts ATP. Thr-16 contacts Mg(2+). The active site involves Lys-33. A substrate-binding site is contributed by Ser-37. Residues Asp-50, Glu-110–Gly-113, and Asn-170–Cys-171 contribute to the ATP site. Mg(2+) is bound by residues Asp-50 and Glu-110.

The protein belongs to the dethiobiotin synthetase family. Homodimer. Requires Mg(2+) as cofactor.

It is found in the cytoplasm. The enzyme catalyses (7R,8S)-7,8-diammoniononanoate + CO2 + ATP = (4R,5S)-dethiobiotin + ADP + phosphate + 3 H(+). It participates in cofactor biosynthesis; biotin biosynthesis; biotin from 7,8-diaminononanoate: step 1/2. Catalyzes a mechanistically unusual reaction, the ATP-dependent insertion of CO2 between the N7 and N8 nitrogen atoms of 7,8-diaminopelargonic acid (DAPA, also called 7,8-diammoniononanoate) to form a ureido ring. The chain is ATP-dependent dethiobiotin synthetase BioD from Legionella pneumophila (strain Paris).